Here is a 526-residue protein sequence, read N- to C-terminus: Cell adhesion molecule CEACAM1 (526 aa).

The signal sequence occupies residues 1–34 (MGHLSAPLHRVRVPWQGLLLTASLLTFWNPPTTA). Gln35 is subject to Pyrrolidone carboxylic acid. The 108-residue stretch at 35 to 142 (QLTTESMPFN…EATGQFHVYP (108 aa)) folds into the Ig-like V-type domain. At 35 to 428 (QLTTESMPFN…LPQENGLSPG (394 aa)) the chain is on the extracellular side. The required for homophilic binding stretch occupies residues 39-142 (ESMPFNVAEG…EATGQFHVYP (104 aa)). N-linked (GlcNAc...) asparagine glycosylation is found at Asn104, Asn111, Asn115, Asn152, Asn182, Asn197, Asn208, Asn224, Asn232, Asn254, Asn274, Asn288, Asn292, Asn302, Asn309, Asn345, Asn351, Asn363, Asn378, and Asn405. 3 consecutive Ig-like C2-type domains span residues 145 to 232 (PKPS…VTLN), 237 to 317 (PDTP…KTII), and 323 to 413 (PVVA…IMLN). An intrachain disulfide couples Cys167 to Cys215. Cysteines 259 and 299 form a disulfide. Cysteines 348 and 396 form a disulfide. A helical transmembrane segment spans residues 429–452 (AIAGIVIGVVALVALIAVALACFL). The interaction with calmodulin stretch occupies residues 450 to 462 (CFLHFGKTGRASD). The interval 452–526 (LHFGKTGRAS…EIIYSEVKKQ (75 aa)) is interaction with FLNA. The Cytoplasmic portion of the chain corresponds to 453–526 (HFGKTGRASD…EIIYSEVKKQ (74 aa)). Residues 461–482 (SDQRDLTEHKPSVSNHTQDHSN) are compositionally biased toward basic and acidic residues. The interval 461–513 (SDQRDLTEHKPSVSNHTQDHSNDPPNKMNEVTYSTLNFEAQQPTQPTSASPSL) is disordered. The span at 489 to 513 (NEVTYSTLNFEAQQPTQPTSASPSL) shows a compositional bias: polar residues. Residues 489–526 (NEVTYSTLNFEAQQPTQPTSASPSLTATEIIYSEVKKQ) are required for interaction with PTPN11 and PTPN6 and for control of phosphorylation level. Position 493 is a phosphotyrosine; by SRC, LCK, INSR and EGFR (Tyr493). A Phosphoserine modification is found at Ser508. At Tyr520 the chain carries Phosphotyrosine; by INSR, SRC and LCK. The essential for interaction with PTPN11 and PTPN6 stretch occupies residues 520–523 (YSEV).

It belongs to the immunoglobulin superfamily. CEA family. Monomer. Oligomer. Heterodimer. Homodimer. Cis-dimer/oligomer (via Ig-like C2-type and/or via cytoplasmic domains); induced by trans-homophilic cell adhesion through an allosteric mechanism transmitted by the Ig-like V-type domain, and is regulated by intracellular calcium and calmodulin. Interacts (via cytoplasmic domain) with calmodulin in a calcium dependent manner; reduces homophilic cell adhesion through dissociation of dimer. Isoform 1 interacts (via cytoplasmic domain) with PTPN11 (preferentially) and PTPN6; cis-homodimer form is preferred; this interaction is decreased by formation of Isoform 1 /Isoform 8 cis-heterodimers and is dependent on the monomer/dimer equilibrium; this interaction is phosphorylation-dependent. Isoform 1 interacts with LYN. Isoform 1 interacts (via cytoplasmic domain) with SRC (via SH2 domain); this interaction is regulated by trans-homophilic cell adhesion. Isoform 1 interacts (via cytoplasmic domain) with LCK; mediates phosphorylation at Tyr-493 and Tyr-520 resulting in PTPN6 association. Isoform 1 interacts with PTPN6; this interaction is phosphorylation-dependent and causes a profound decrease in TCR stimulation-induced CD247 and ZAP70 phosphorylation. Isoform 1 interacts with TCR/CD3 complex through TCR beta chain and CD3E; colocalizes at the cell surface and upon stimulation of the TCR/CD3 complex recruits PTPN6 in the TCR/CD3 complex, resulting in dephosphorylation of CD247 and ZAP70. Isoform 1 interacts (via cytoplasmic domain) with SHC1 (via SH2 domain); SHC1 mediates interaction with INSR or EGFR in a Ser-508 phosphorylation-dependent manner. Isoform 1 interacts with EGFR; the interaction is indirect. Isoform 1 interacts with CSF3R; down-regulates the CSF3R-STAT3 pathway through recruitment of PTPN6 that dephosphorylates CSF3R. Isoform 1 (phosphorylated form) interacts with TLR4 and SYK; recruits PTPN6 that dephosphorylates SYK, reducing the production of reactive oxygen species (ROS) and lysosome disruption, leading to a reduction of the inflammasome activity. Isoform 1 interacts with FLNA; inhibits cell migration and cell scattering by interfering with the interaction of FLNA with RALA. Isoform 1 interacts (via cytoplasmic domain) with PXN; the interaction is phosphotyrosyl-dependent. Isoform 1 interacts with KLRK1; recruits PTPN6 that dephosphorylates VAV1. Isoform 1 interacts with CEACAM8. Isoform 1 interacts with FASN; this interaction is insulin and phosphorylation-dependent; reduces fatty-acid synthase activity. Interacts (via Ig-like V-type) with HAVCR2 (via Ig-like V-type); facilitates the maturation and cell surface expression of HAVCR2 thereby regulating T cell tolerance induction. Isoform 8 interacts (via the cytoplasmic domain) with ANXA2; this interaction is regulated by phosphorylation and appears in the AIIt complex. Interacts (via Lewis X moieties) with CD209 (via C-type lectin domain); this interaction is regulated by the glycosylation pattern of CEACAM1 on cell types and regulates contact between dendritic cells and neutrophils. Phosphorylated on serine and tyrosine. Isoform 1 is phosphorylated on tyrosine by Src family kinases like SRC and LCK and by receptor like CSF3R, EGFR and INSR upon stimulation. Phosphorylated at Ser-508; mediates activity. Phosphorylated at Tyr-493; regulates activity. Phosphorylated at Tyr-493 by EGFR and INSR upon stimulation; this phosphorylation is Ser-508-phosphorylation-dependent; mediates cellular internalization; increases interaction with downstream proteins like SHC1 and FASN. Phosphorylated at Tyr-493 and Tyr-520 by LCK; mediates PTPN6 association and is regulated by homophilic ligation of CEACAM1 in the absence of T cell activation. Phosphorylated at Tyr-520; mediates interaction with PTPN11. In terms of processing, phosphorylated on serine and threonine. As to expression, expressed in columnar epithelial cells of the colon (at protein level). The predominant forms expressed by T cells are those containing a long cytoplasmic domain. Expressed in granulocytes and lymphocytes. Leukocytes only express isoforms 6 and isoform 1.

It localises to the cell membrane. The protein localises to the lateral cell membrane. Its subcellular location is the apical cell membrane. It is found in the basal cell membrane. The protein resides in the cell junction. It localises to the adherens junction. The protein localises to the secreted. Its subcellular location is the cytoplasmic vesicle. It is found in the secretory vesicle membrane. The protein resides in the cell projection. It localises to the microvillus membrane. Cell adhesion protein that mediates homophilic cell adhesion in a calcium-independent manner. Plays a role as coinhibitory receptor in immune response, insulin action and also functions as an activator during angiogenesis. Its coinhibitory receptor function is phosphorylation- and PTPN6 -dependent, which in turn, suppress signal transduction of associated receptors by dephosphorylation of their downstream effectors. Plays a role in immune response, of T cells, natural killer (NK) and neutrophils. Upon TCR/CD3 complex stimulation, inhibits TCR-mediated cytotoxicity by blocking granule exocytosis by mediating homophilic binding to adjacent cells, allowing interaction with and phosphorylation by LCK and interaction with the TCR/CD3 complex which recruits PTPN6 resulting in dephosphorylation of CD247 and ZAP70. Also inhibits T cell proliferation and cytokine production through inhibition of JNK cascade and plays a crucial role in regulating autoimmunity and anti-tumor immunity by inhibiting T cell through its interaction with HAVCR2. Upon natural killer (NK) cells activation, inhibit KLRK1-mediated cytolysis of CEACAM1-bearing tumor cells by trans-homophilic interactions with CEACAM1 on the target cell and lead to cis-interaction between CEACAM1 and KLRK1, allowing PTPN6 recruitment and then VAV1 dephosphorylation. Upon neutrophils activation negatively regulates IL1B production by recruiting PTPN6 to a SYK-TLR4-CEACAM1 complex, that dephosphorylates SYK, reducing the production of reactive oxygen species (ROS) and lysosome disruption, which in turn, reduces the activity of the inflammasome. Down-regulates neutrophil production by acting as a coinhibitory receptor for CSF3R by down-regulating the CSF3R-STAT3 pathway through recruitment of PTPN6 that dephosphorylates CSF3R. Also regulates insulin action by promoting INS clearance and regulating lipogenesis in liver through regulating insulin signaling. Upon INS stimulation, undergoes phosphorylation by INSR leading to INS clearance by increasing receptor-mediated insulin endocytosis. This inernalization promotes interaction with FASN leading to receptor-mediated insulin degradation and to reduction of FASN activity leading to negative regulation of fatty acid synthesis. INSR-mediated phosphorylation also provokes a down-regulation of cell proliferation through SHC1 interaction resulting in decrease coupling of SHC1 to the MAPK3/ERK1-MAPK1/ERK2 and phosphatidylinositol 3-kinase pathways. Functions as activator in angiogenesis by promoting blood vessel remodeling through endothelial cell differentiation and migration and in arteriogenesis by increasing the number of collateral arteries and collateral vessel calibers after ischemia. Also regulates vascular permeability through the VEGFR2 signaling pathway resulting in control of nitric oxide production. Down-regulates cell growth in response to EGF through its interaction with SHC1 that mediates interaction with EGFR resulting in decrease coupling of SHC1 to the MAPK3/ERK1-MAPK1/ERK2 pathway. Negatively regulates platelet aggregation by decreasing platelet adhesion on type I collagen through the GPVI-FcRgamma complex. Inhibits cell migration and cell scattering through interaction with FLNA; interferes with the interaction of FLNA with RALA. Mediates bile acid transport activity in a phosphorylation dependent manner. Negatively regulates osteoclastogenesis. Its function is as follows. Cell adhesion protein that mediates homophilic cell adhesion in a calcium-independent manner. Promotes populations of T cells regulating IgA production and secretion associated with control of the commensal microbiota and resistance to enteropathogens. In Homo sapiens (Human), this protein is Cell adhesion molecule CEACAM1.